A 325-amino-acid chain; its full sequence is MAIKNILALVVLLSVVGVSVAIPQLLDLDYYRSKCPKAEEIVRGVTVQYVSRQKTLAAKLLRMHFHDCFVRGCDGSVLLKSAKNDAERDAVPNLTLKGYEVVDAAKTALERKCPNLISCADVLALVARDAVAVIGGPWWPVPLGRRDGRISKLNDALLNLPSPFADIKTLKKNFANKGLNAKDLVVLSGGHTIGISSCALVNSRLYNFTGKGDSDPSMNPSYVRELKRKCPPTDFRTSLNMDPGSALTFDTHYFKVVAQKKGLFTSDSTLLDDIETKNYVQTQAILPPVFSSFNKDFSDSMVKLGFVQILTGKNGEIRKRCAFPN.

Residues 1-21 (MAIKNILALVVLLSVVGVSVA) form the signal peptide. Intrachain disulfides connect C35/C113, C68/C73, C119/C321, and C198/C230. H66 serves as the catalytic Proton acceptor. Residues D67, V70, G72, D74, and S76 each coordinate Ca(2+). P161 is a substrate binding site. Residue H191 participates in heme b binding. T192 is a binding site for Ca(2+). N207 is a glycosylation site (N-linked (GlcNAc...) asparagine). 3 residues coordinate Ca(2+): D242, S245, and D250.

This sequence belongs to the peroxidase family. Classical plant (class III) peroxidase subfamily. It depends on heme b as a cofactor. The cofactor is Ca(2+). As to expression, slightly expressed in roots.

The protein localises to the secreted. It catalyses the reaction 2 a phenolic donor + H2O2 = 2 a phenolic radical donor + 2 H2O. Its function is as follows. Removal of H(2)O(2), oxidation of toxic reductants, biosynthesis and degradation of lignin, suberization, auxin catabolism, response to environmental stresses such as wounding, pathogen attack and oxidative stress. These functions might be dependent on each isozyme/isoform in each plant tissue. This chain is Peroxidase 1 (PER1), found in Arabidopsis thaliana (Mouse-ear cress).